The primary structure comprises 291 residues: MKIAVYGKGGIGKSTTSCNISVALARRGQKVLQIGCDPKHDSTFTLTGFLIPTIIDTLQSKDYHYEDIWPEDVIHKGYGGVDCVEAGGPPAGAGCGGYVVGETVKLLKELNAFYEYDIILFDVLGDVVCGGFAAPLNYADYCVIITDNGFDALFAANRITASIREKARTHPLRLAGLVGNRTSRRDLINKYVEACPMPVIEVLPIIEDIRVSRVKGKTLFEMVGSEPSLNYVCNYYLGIADQILSQPEGIVPKEIPDRELFSLLSDLYLNPIGGGGQKKNKKEILLGFTRI.

Residues 10-15 (GIGKST) and Lys-39 contribute to the ATP site. Mg(2+) is bound at residue Ser-14. [4Fe-4S] cluster-binding residues include Cys-95 and Cys-129. 180–181 (NR) is an ATP binding site.

This sequence belongs to the NifH/BchL/ChlL family. Homodimer. Protochlorophyllide reductase is composed of three subunits; ChlL, ChlN and ChlB. [4Fe-4S] cluster is required as a cofactor.

The protein resides in the plastid. Its subcellular location is the chloroplast. It catalyses the reaction chlorophyllide a + oxidized 2[4Fe-4S]-[ferredoxin] + 2 ADP + 2 phosphate = protochlorophyllide a + reduced 2[4Fe-4S]-[ferredoxin] + 2 ATP + 2 H2O. The protein operates within porphyrin-containing compound metabolism; chlorophyll biosynthesis (light-independent). Component of the dark-operative protochlorophyllide reductase (DPOR) that uses Mg-ATP and reduced ferredoxin to reduce ring D of protochlorophyllide (Pchlide) to form chlorophyllide a (Chlide). This reaction is light-independent. The L component serves as a unique electron donor to the NB-component of the complex, and binds Mg-ATP. The chain is Light-independent protochlorophyllide reductase iron-sulfur ATP-binding protein from Pinus contorta (Shore pine).